Reading from the N-terminus, the 100-residue chain is Aspartyl/glutamyl-tRNA(Asn/Gln) amidotransferase subunit C (100 aa).

The protein belongs to the GatC family. In terms of assembly, heterotrimer of A, B and C subunits.

It carries out the reaction L-glutamyl-tRNA(Gln) + L-glutamine + ATP + H2O = L-glutaminyl-tRNA(Gln) + L-glutamate + ADP + phosphate + H(+). The catalysed reaction is L-aspartyl-tRNA(Asn) + L-glutamine + ATP + H2O = L-asparaginyl-tRNA(Asn) + L-glutamate + ADP + phosphate + 2 H(+). Functionally, allows the formation of correctly charged Asn-tRNA(Asn) or Gln-tRNA(Gln) through the transamidation of misacylated Asp-tRNA(Asn) or Glu-tRNA(Gln) in organisms which lack either or both of asparaginyl-tRNA or glutaminyl-tRNA synthetases. The reaction takes place in the presence of glutamine and ATP through an activated phospho-Asp-tRNA(Asn) or phospho-Glu-tRNA(Gln). The protein is Aspartyl/glutamyl-tRNA(Asn/Gln) amidotransferase subunit C of Staphylococcus carnosus (strain TM300).